We begin with the raw amino-acid sequence, 535 residues long: Interferon lambda receptor 1 (535 aa).

The signal sequence occupies residues 1-20 (MWRADRWAPLLLFLLQSALG). The Extracellular segment spans residues 21–227 (RPRLAPPRNV…FLEAPGDKRA (207 aa)). One can recognise a Fibronectin type-III domain in the interval 26-121 (PPRNVTLFSQ…ESRYLEYLFD (96 aa)). N-linked (GlcNAc...) asparagine glycosylation is found at asparagine 29, asparagine 36, and asparagine 52. Disulfide bonds link cysteine 73-cysteine 81, cysteine 85-cysteine 149, and cysteine 194-cysteine 216. Residue asparagine 141 is glycosylated (N-linked (GlcNAc...) asparagine). The chain crosses the membrane as a helical span at residues 228-248 (VLAMPSLLLLLIAAVAAGVAW). Over 249-535 (KIMKGNPWFQ…GRMLGDYLVR (287 aa)) the chain is Cytoplasmic. 2 disordered regions span residues 301–419 (NRPA…APCG) and 478–520 (VNNP…SSVQ). Residues 321–336 (STEDEDEDTDYDDDGD) show a composition bias toward acidic residues. Over residues 350-360 (EKPRVMEHSET) the composition is skewed to basic and acidic residues. Low complexity predominate over residues 376-396 (GSDGSSAWDSSDRSWSSTGDS). Residues 397-414 (SYKDEVGSSSCLDRKEPD) are compositionally biased toward basic and acidic residues. Residues 482-503 (EGEEEQEDEEEEEEEEEEEDWE) are compositionally biased toward acidic residues.

This sequence belongs to the type II cytokine receptor family. As to quaternary structure, heterodimer with IL10RB. Ubiquitinated by FBXO45-containing E3 ligase leading to proteasomal degradation.

Its subcellular location is the membrane. In terms of biological role, the IFNLR1/IL10RB dimer is a receptor for the cytokine ligands IFNL2 and IFNL3 and mediates their antiviral activity. The ligand/receptor complex stimulate the activation of the JAK/STAT signaling pathway leading to the expression of IFN-stimulated genes (ISG), which contribute to the antiviral state. Determines the cell type specificity of the lambda interferon action. Shows a more restricted pattern of expression in the epithelial tissues thereby limiting responses to lambda interferons primarily to epithelial cells of the respiratory, gastrointestinal, and reproductive tracts. Seems not to be essential for early virus-activated host defense in vaginal infection, but plays an important role in Toll-like receptor (TLR)-induced antiviral defense. Plays a significant role in the antiviral immune defense in the intestinal epithelium. The sequence is that of Interferon lambda receptor 1 (Ifnlr1) from Mus musculus (Mouse).